The sequence spans 725 residues: Antigen peptide transporter 1 (725 aa).

Residues 1–8 (MAAHAWPT) lie on the Cytoplasmic side of the membrane. A helical transmembrane segment spans residues 9–29 (AALLLLLVDWLLLRPVLPGIF). Topologically, residues 30–38 (SLLVPEVPL) are lumenal. Residues 39–60 (LRVWAVGLSRWAILGLGVRGVL) form a helical membrane-spanning segment. The Cytoplasmic portion of the chain corresponds to 61–67 (GVTAGAR). The chain crosses the membrane as a helical span at residues 68–88 (GWLAALQPLVAALGLALPGLA). Over 89–110 (SFRKLSAWGALREGDNAGLLHW) the chain is Lumenal. The chain crosses the membrane as a helical span at residues 111–131 (NSRLDAFVLSYVAALPAAALW). Over 132 to 163 (HKLGGFWAPSGHKGAGDMLCRMLGFLDSKKGR) the chain is Cytoplasmic. Residues 164–184 (LHLVLVLLILSCLGEMAIPFF) form a helical membrane-spanning segment. The ABC transmembrane type-1 domain maps to 164–447 (LHLVLVLLIL…LLSIYPSMQK (284 aa)). Residues 185–204 (TGRITDWILQDKTAPSFARN) lie on the Lumenal side of the membrane. Residues 205–225 (MWLMCILTIASTVLEFAGDGI) traverse the membrane as a helical segment. Over 226–275 (YNITMGHMHSRVHGEVFRAVLHQETGFFLKNPTGSITSRVTEDTSNVCES) the chain is Cytoplasmic. A helical transmembrane segment spans residues 276–296 (ISDKLNLFLWYLGRGLCLLAF). The Lumenal segment spans residues 297-305 (MIWGSFYLT). The chain crosses the membrane as a helical span at residues 306 to 326 (VVTLLSLPLLFLLPRRLGKVY). Residues 327-395 (QSLAVKVQES…VTEVWTMSVS (69 aa)) lie on the Cytoplasmic side of the membrane. A part of the peptide-binding site region spans residues 352-397 (PTVRSFANEEGEAQKFRQKLEEMKPLNKKEALAYVTEVWTMSVSGM). Residues 396–416 (GMLLKVGILYLGGQLVVRGAV) form a helical membrane-spanning segment. At 417-420 (SSGN) the chain is on the lumenal side. Residues 421 to 441 (LVSFVLYQLQFTRAVEVLLSI) traverse the membrane as a helical segment. Positions 430-464 (QFTRAVEVLLSIYPSMQKSVGASEKIFEYLDRTPC) are part of the peptide-binding site. Over 442-725 (YPSMQKSVGA…MVEALAAPSD (284 aa)) the chain is Cytoplasmic. Positions 480–719 (VKFQDVSFAY…GGCYRSMVEA (240 aa)) constitute an ABC transporter domain. ATP contacts are provided by residues 515–523 (GPNGSGKST), 618–624 (NQLSGGQ), and Gln678. Ser522 contributes to the Mg(2+) binding site.

The protein belongs to the ABC transporter superfamily. ABCB family. MHC peptide exporter (TC 3.A.1.209) subfamily. As to quaternary structure, heterodimer of TAP1 and TAP2 (TAP1-TAP2). A component of the peptide loading complex (PLC), interacts via TAPBP with MHCI heterodimer; this interaction mediates peptide-MHCI assembly. Interacts with PSMB5 and PSMB8. The cofactor is Mg(2+).

The protein resides in the endoplasmic reticulum membrane. It carries out the reaction a peptide antigen(in) + ATP + H2O = a peptide antigen(out) + ADP + phosphate + H(+). In terms of biological role, ABC transporter associated with antigen processing. In complex with TAP2 mediates unidirectional translocation of peptide antigens from cytosol to endoplasmic reticulum (ER) for loading onto MHC class I (MHCI) molecules. Uses the chemical energy of ATP to export peptides against the concentration gradient. During the transport cycle alternates between 'inward-facing' state with peptide binding site facing the cytosol to 'outward-facing' state with peptide binding site facing the ER lumen. Peptide antigen binding to ATP-loaded TAP1-TAP2 induces a switch to hydrolysis-competent 'outward-facing' conformation ready for peptide loading onto nascent MHCI molecules. Subsequently ATP hydrolysis resets the transporter to the 'inward facing' state for a new cycle. As a component of the peptide loading complex (PLC), acts as a molecular scaffold essential for peptide-MHCI assembly and antigen presentation. This chain is Antigen peptide transporter 1 (Tap1), found in Rattus norvegicus (Rat).